The following is a 175-amino-acid chain: B9 domain-containing protein 2 (175 aa).

The C2 B9-type domain maps to 2-118 (AEVHVIGQII…DCPTWRPLGS (117 aa)).

This sequence belongs to the B9D family. As to quaternary structure, part of the tectonic-like complex (also named B9 complex). Interacts with TUBG1.

Its subcellular location is the cytoplasm. The protein resides in the cytoskeleton. The protein localises to the cilium basal body. It localises to the cilium axoneme. It is found in the nucleus. Functionally, component of the tectonic-like complex, a complex localized at the transition zone of primary cilia and acting as a barrier that prevents diffusion of transmembrane proteins between the cilia and plasma membranes. The chain is B9 domain-containing protein 2 (B9d2) from Rattus norvegicus (Rat).